The chain runs to 434 residues: Adenylosuccinate synthetase (434 aa).

GTP contacts are provided by residues 22 to 28 (GDEGKGK) and 50 to 52 (GHT). The active-site Proton acceptor is D23. Positions 23 and 50 each coordinate Mg(2+). Residues 23-26 (DEGK), 48-51 (NAGH), T139, R153, Q234, T249, and R313 contribute to the IMP site. The active-site Proton donor is the H51. Substrate is bound at residue 309–315 (ATTGRKR). GTP contacts are provided by residues R315, 341 to 343 (KLD), and 423 to 425 (SVG).

It belongs to the adenylosuccinate synthetase family. In terms of assembly, homodimer. It depends on Mg(2+) as a cofactor.

It localises to the cytoplasm. It carries out the reaction IMP + L-aspartate + GTP = N(6)-(1,2-dicarboxyethyl)-AMP + GDP + phosphate + 2 H(+). It participates in purine metabolism; AMP biosynthesis via de novo pathway; AMP from IMP: step 1/2. Functionally, plays an important role in the de novo pathway of purine nucleotide biosynthesis. Catalyzes the first committed step in the biosynthesis of AMP from IMP. The sequence is that of Adenylosuccinate synthetase from Chlorobium phaeovibrioides (strain DSM 265 / 1930) (Prosthecochloris vibrioformis (strain DSM 265)).